Consider the following 255-residue polypeptide: Malonyl-[acyl-carrier protein] O-methyltransferase (255 aa).

Belongs to the methyltransferase superfamily.

The enzyme catalyses malonyl-[ACP] + S-adenosyl-L-methionine = malonyl-[ACP] methyl ester + S-adenosyl-L-homocysteine. It functions in the pathway cofactor biosynthesis; biotin biosynthesis. Functionally, converts the free carboxyl group of a malonyl-thioester to its methyl ester by transfer of a methyl group from S-adenosyl-L-methionine (SAM). It allows to synthesize pimeloyl-ACP via the fatty acid synthetic pathway. In Porphyromonas gingivalis (strain ATCC BAA-308 / W83), this protein is Malonyl-[acyl-carrier protein] O-methyltransferase.